Reading from the N-terminus, the 417-residue chain is Squamosa promoter-binding-like protein 14 (417 aa).

Gly residues-rich tracts occupy residues 1-26 and 51-60; these read MEMA…GGGG and AGGGGTGSGS. Disordered stretches follow at residues 1–32 and 51–102; these read MEMA…EHRQ and AGGG…PPPP. The segment covering 61–74 has biased composition (low complexity); that stretch reads GSASAAPPSSSSKA. A compositionally biased stretch (gly residues) spans 75–84; it reads AGGGRGGGGK. The SBP-type zinc finger occupies 101–178; it reads PPRCQVEGCG…AGHNERRRRP (78 aa). Zn(2+) contacts are provided by Cys104, Cys109, Cys126, His129, Cys145, Cys148, and His152. A Bipartite nuclear localization signal motif is present at residues 161 to 177; the sequence is KRSCRRRLAGHNERRRR. The residue at position 163 (Ser163) is a Phosphoserine. Residue Cys164 participates in Zn(2+) binding. Residues 387 to 417 are disordered; that stretch reads LQGNGPAPAPRIDPGSGSTFDQTSNTMDWSL. Residues 402-417 show a composition bias toward polar residues; the sequence is SGSTFDQTSNTMDWSL.

Interacts with PCF1 and PCF2. Interacts with IPI1. Interacts with D53. Interacts with SLR1. Interacts (via C-terminus) with SHI1. In terms of processing, phosphorylated at Ser-163 in response to infection by the fungal pathogen Magnaporthe oryzae. Post-translationally, ubiquitinated by IPI1, which leads to proteasomal degradation. As to expression, expressed in young panicles. Expressed in the shoot apex at both the vegetative and reproductive stages. Highly expressed in the promordia of primary and secondary branches. Highly expressed in young panicles.

The protein localises to the nucleus. Transcriptional activator that binds to the SBP-box DNA core binding motif 5'-GTAC-3'. Can target the TCP motif 5'-TGGGCC/T-3' through interaction with PCF1 and PCF2. Key regulator of the plant architecture that controls shoot branching and panicle development. Promotes panicle branching. Promotes high grain yield. Binds to the promoters of TB1 and DEP1. Suppresses rice tillering mainly through positive regulation of TB1. Regulates plant height and panicle length through positive regulation of DEP1. Repressed by D53 in strigolactone (SL) signaling. Acts with D53 to mediate the SL-regulated tiller development. Functions as a direct downstream component of D53 in regulating tiller number and SL-induced gene expression. Binds directly to the D53 promoter and plays a critical role in the negative feedback regulation of SL-induced D53 expression. Involved in defense response against pathogens. Phosphorylated at Ser-163 in response to infection by the fungal pathogen Magnaporthe oryzae. Phosphorylation reduces SPL14/IPA1 binding to the GTAC site in the DEP1 promoter and enhances binding to the TGGGCC site in the WRKY45 promoter. Binding to the promoter of the pathogen defense gene WRKY45 activates its expression, leading to enhanced disease resistance. Reduces gibberellin-mediated disease susceptibility by stabilizing SLR1. Possesses transactivation activity in yeast cells. This is Squamosa promoter-binding-like protein 14 from Oryza sativa subsp. japonica (Rice).